The sequence spans 62 residues: Alpha-toxin Tf4 (62 aa).

An LCN-type CS-alpha/beta domain is found at Lys-2 to Cys-62. 4 disulfide bridges follow: Cys-12–Cys-62, Cys-16–Cys-38, Cys-24–Cys-43, and Cys-28–Cys-45. Cys-62 carries the cysteine amide modification.

In terms of tissue distribution, expressed by the venom gland.

Its subcellular location is the secreted. Alpha toxins bind voltage-independently at site-3 of sodium channels (Nav) and inhibit the inactivation of the activated channels, thereby blocking neuronal transmission. This toxin is toxic to frogs but non-toxic to insect larvae (T.molitor), mammals (rats) and crustaceans (crabs) at the doses assayed. This chain is Alpha-toxin Tf4, found in Tityus fasciolatus (Central Brazilian scorpion).